The sequence spans 499 residues: Potassium voltage-gated channel subfamily A member 2 (499 aa).

The tract at residues 1 to 27 is disordered; the sequence is MTVATGEPADEAAALPGHPQDTYDPEA. Positions 1–125 are tetramerization domain; sequence MTVATGEPAD…YELGEEAMEM (125 aa). Over 1 to 160 the chain is Cytoplasmic; that stretch reads MTVATGEPAD…LLFEYPESSG (160 aa). Residues 161 to 182 form a helical membrane-spanning segment; that stretch reads PARIIAIVSVMVILISIVSFCL. At 183 to 221 the chain is on the extracellular side; the sequence is ETLPIFRDENEDMHGGGVTFHTYSNSTIGYQQSTSFTDP. The N-linked (GlcNAc...) asparagine glycan is linked to asparagine 207. A helical transmembrane segment spans residues 222–243; that stretch reads FFIVETLCIIWFSFEFLVRFFA. Cysteine 244 is lipidated: S-palmitoyl cysteine. Topologically, residues 244 to 254 are cytoplasmic; the sequence is CPSKAGFFTNI. A helical membrane pass occupies residues 255 to 275; sequence MNIIDIVAIIPYFITLGTELA. At 276–289 the chain is on the extracellular side; sequence EKPEDAQQGQQAMS. A helical; Voltage-sensor transmembrane segment spans residues 290 to 310; the sequence is LAILRVIRLVRVFRIFKLSRH. Over 311–325 the chain is Cytoplasmic; the sequence is SKGLQILGQTLKASM. An S4-S5 linker region spans residues 312–325; that stretch reads KGLQILGQTLKASM. Residues 326–347 form a helical membrane-spanning segment; sequence RELGLLIFFLFIGVILFSSAVY. Over 348 to 361 the chain is Extracellular; it reads FAEADERESQFPSI. The segment at residues 362–373 is an intramembrane region (helical); the sequence is PDAFWWAVVSMT. A Selectivity filter motif is present at residues 374 to 379; the sequence is TVGYGD. Residues 374–381 lie within the membrane without spanning it; it reads TVGYGDMV. Residues 382–388 lie on the Extracellular side of the membrane; that stretch reads PTTIGGK. The chain crosses the membrane as a helical span at residues 389-417; it reads IVGSLCAIAGVLTIALPVPVIVSNFNYFY. Residues 418-499 are Cytoplasmic-facing; that stretch reads HRETEGEEQA…VNITKMLTDV (82 aa). Tyrosine 429 carries the post-translational modification Phosphotyrosine. Residues serine 434, serine 440, serine 441, and serine 449 each carry the phosphoserine modification. Position 458 is a phosphotyrosine (tyrosine 458). A Phosphoserine modification is found at serine 468. The PDZ-binding signature appears at 497-499; the sequence is TDV.

Belongs to the potassium channel family. A (Shaker) (TC 1.A.1.2) subfamily. Kv1.2/KCNA2 sub-subfamily. As to quaternary structure, homotetramer and heterotetramer with other channel-forming alpha subunits, such as KCNA1, KCNA4, KCNA5, KCNA6 and KCNA7. Channel activity is regulated by interaction with the beta subunits, including KCNAB1 and KCNAB2. Identified in a complex with KCNA1 and KCNAB2. Identified in a complex with KCNA5 and KCNAB1. Interacts with the beta subunit KCNAB1. Identified in a complex with KCNA4 and FYN. Interacts with PTK2B. Interacts (via C-terminus) with CTTN. Interacts (via N-terminal cytoplasmic domain) with RHOA (GTP-bound form); this regulates channel activity by reducing location at the cell surface in response to CHRM1 activation. Interacts with DRD2. Interacts with SIGMAR1; cocaine consumption leads to increased interaction. Interacts with ADAM22. Interacts with CNTNAP2. Interacts (via C-terminus) with the PDZ domains of DLG1, DLG2 and DLG4. Interacts with ADAM11. Interacts with LYNX1. Phosphorylated on tyrosine residues; phosphorylation increases in response to ischemia. Phosphorylated on tyrosine residues by activated PTK2B/PYK2. Phosphorylation on tyrosine residues suppresses ion channel activity. Phosphorylated on tyrosine residues in response to CHRM1 activation; this abolishes interaction with CTTN. This is probably due to endocytosis of the phosphorylated channel subunits. Phosphorylated on serine residues in response to increased cAMP levels; phosphorylation is apparently not catalyzed by PKA. Post-translationally, N-glycosylated, with complex, sialylated N-glycans. As to expression, expressed in a wide variety of gastrointestinal smooth muscles. Not expressed in portal vein, renal artery, and uterus.

Its subcellular location is the cell membrane. It localises to the membrane. It is found in the cell projection. The protein localises to the axon. The protein resides in the synapse. Its subcellular location is the presynaptic cell membrane. It localises to the synaptosome. It is found in the endoplasmic reticulum membrane. The protein localises to the dendrite. The protein resides in the lamellipodium membrane. Its subcellular location is the cell junction. It localises to the paranodal septate junction. It catalyses the reaction K(+)(in) = K(+)(out). With respect to regulation, inhibited by 4-aminopyridine (4-AP). Inhibited by dendrotoxin (DTX) and charybdotoxin (CTX), but not by tetraethylammonium (TEA). Inhibited by tityustoxin-K alpha (TsTX-Kalpha), a toxin that is highly specific for KCNA2. Inhibited by maurotoxin. Inhibited by kappaM conotoxins kappaM-RIIIJ and kappaM-RIIIK. Functionally, voltage-gated potassium channel that mediates transmembrane potassium transport in excitable membranes, primarily in the brain and the central nervous system, but also in the cardiovascular system. Prevents aberrant action potential firing and regulates neuronal output. Forms tetrameric potassium-selective channels through which potassium ions pass in accordance with their electrochemical gradient. The channel alternates between opened and closed conformations in response to the voltage difference across the membrane. Can form functional homotetrameric channels and heterotetrameric channels that contain variable proportions of KCNA1, KCNA2, KCNA4, KCNA5, KCNA6, KCNA7, and possibly other family members as well; channel properties depend on the type of alpha subunits that are part of the channel. Channel properties are modulated by cytoplasmic beta subunits that regulate the subcellular location of the alpha subunits and promote rapid inactivation of delayed rectifier potassium channels. In vivo, membranes probably contain a mixture of heteromeric potassium channel complexes, making it difficult to assign currents observed in intact tissues to any particular potassium channel family member. Homotetrameric KCNA2 forms a delayed-rectifier potassium channel that opens in response to membrane depolarization, followed by slow spontaneous channel closure. In contrast, a heteromultimer formed by KCNA2 and KCNA4 shows rapid inactivation. Regulates neuronal excitability and plays a role as pacemaker in the regulation of neuronal action potentials. KCNA2-containing channels play a presynaptic role and prevent hyperexcitability and aberrant action potential firing. Response to toxins that are selective for KCNA2-containing potassium channels suggests that in Purkinje cells, dendritic subthreshold KCNA2-containing potassium channels prevent random spontaneous calcium spikes, suppressing dendritic hyperexcitability without hindering the generation of somatic action potentials, and thereby play an important role in motor coordination. Plays a role in the induction of long-term potentiation of neuron excitability in the CA3 layer of the hippocampus. May function as down-stream effector for G protein-coupled receptors and inhibit GABAergic inputs to basolateral amygdala neurons. May contribute to the regulation of neurotransmitter release, such as gamma-aminobutyric acid (GABA). Contributes to the regulation of the axonal release of the neurotransmitter dopamine. Reduced KCNA2 expression plays a role in the perception of neuropathic pain after peripheral nerve injury, but not acute pain. Plays a role in the regulation of the time spent in non-rapid eye movement (NREM) sleep. This is Potassium voltage-gated channel subfamily A member 2 (KCNA2) from Canis lupus familiaris (Dog).